The following is a 1312-amino-acid chain: Multidrug resistance protein 3 (1312 aa).

A helical membrane pass occupies residues 51–71 (GFIDYILLIGGIIGAMAAGVL). The ABC transmembrane type-1 1 domain maps to 59 to 369 (IGGIIGAMAA…VAMPINALST (311 aa)). Asn-98 carries an N-linked (GlcNAc...) asparagine glycan. Helical transmembrane passes span 127 to 147 (IYFAIGTTVGMFLMHFCFFVL), 197 to 217 (KFGVLFQTICGFIAGYAIGFS), 224 to 244 (LVIMAVTPFMLITVLFLGFFA), 302 to 322 (VVGVGLGMLLFFMMGSLALGS), and 344 to 364 (MVVFMSVLMATMSIAQVAMPI). In terms of domain architecture, ABC transporter 1 spans 404–643 (IKLEDVQFRY…KATYYGLVKR (240 aa)). Residue 439–446 (GASGCGKS) coordinates ATP. Residues 724–1033 (LLSFLGLIGG…LGQMIPDVGK (310 aa)) enclose the ABC transmembrane type-1 2 domain. A run of 2 helical transmembrane segments spans residues 725–745 (LSFLGLIGGIGAGAVFPFYMI) and 776–796 (IWILLFGLAVFVTTYMYLGLF). A glycan (N-linked (GlcNAc...) asparagine) is linked at Asn-819. The next 3 helical transmembrane spans lie at 852–872 (VGNVVNTLSSVGFGVGIAFYY), 874–894 (WKVALCVMAIAPVLIVIVFLN), and 958–978 (AFVSAANTFVTSCISAYSFYI). In terms of domain architecture, ABC transporter 2 spans 1068–1307 (IEFKDICFRY…KGFYYTLAMQ (240 aa)). 1103–1110 (GASGCGKS) is an ATP binding site.

Belongs to the ABC transporter superfamily. ABCB family. Multidrug resistance exporter (TC 3.A.1.201) subfamily.

The protein localises to the membrane. The catalysed reaction is ATP + H2O + xenobioticSide 1 = ADP + phosphate + xenobioticSide 2.. Functionally, energy-dependent efflux pump responsible for decreased drug accumulation in multidrug resistance parasites. This is Multidrug resistance protein 3 from Entamoeba histolytica (strain ATCC 30459 / HM-1:IMSS / ABRM).